The following is a 368-amino-acid chain: Chaperone protein DnaJ (368 aa).

The J domain occupies 5-69 (DYYEVLGLSQ…QKRAQYDQFG (65 aa)). The CR-type zinc finger occupies 130–212 (GKELNVEIPV…CHGSGKVRKR (83 aa)). Zn(2+)-binding residues include Cys143, Cys146, Cys160, Cys163, Cys186, Cys189, Cys200, and Cys203. CXXCXGXG motif repeat units follow at residues 143-150 (CDTCKGSG), 160-167 (CKHCSGSG), 186-193 (CGHCSGTG), and 200-207 (CTTCHGSG).

This sequence belongs to the DnaJ family. In terms of assembly, homodimer. Zn(2+) is required as a cofactor.

It is found in the cytoplasm. Its function is as follows. Participates actively in the response to hyperosmotic and heat shock by preventing the aggregation of stress-denatured proteins and by disaggregating proteins, also in an autonomous, DnaK-independent fashion. Unfolded proteins bind initially to DnaJ; upon interaction with the DnaJ-bound protein, DnaK hydrolyzes its bound ATP, resulting in the formation of a stable complex. GrpE releases ADP from DnaK; ATP binding to DnaK triggers the release of the substrate protein, thus completing the reaction cycle. Several rounds of ATP-dependent interactions between DnaJ, DnaK and GrpE are required for fully efficient folding. Also involved, together with DnaK and GrpE, in the DNA replication of plasmids through activation of initiation proteins. The protein is Chaperone protein DnaJ of Bacillus mycoides (strain KBAB4) (Bacillus weihenstephanensis).